Consider the following 386-residue polypeptide: Putative aminotransferase YugH (386 aa).

Lysine 234 carries the post-translational modification N6-(pyridoxal phosphate)lysine.

This sequence belongs to the class-I pyridoxal-phosphate-dependent aminotransferase family. Requires pyridoxal 5'-phosphate as cofactor.

Its subcellular location is the cytoplasm. This chain is Putative aminotransferase YugH (yugH), found in Bacillus subtilis (strain 168).